A 242-amino-acid chain; its full sequence is MAHVCSVILVRRSFDIHHEQQKISLHNESILLLDKNLADDFAFCSLDTRRLDIEELTVCHYLQNIRQLPRNLGLHSKDRLLINQSPPIQLVTAIFDSFNDPRVNSPILSKMLYLSCLSMFSHKKELIPLLFNSISTVSGKVERLISFDIAKRWYLRDIAERMYTSESLIKKKLQDENTCFSKILLASRMSMARRLLELRQIPLHTIAEKCGYSSTSYFINTFRQYYGVTPHQFSQHSPGTFS.

In terms of domain architecture, HTH araC/xylS-type spans 139-236 (GKVERLISFD…GVTPHQFSQH (98 aa)). 2 DNA-binding regions (H-T-H motif) span residues 156-177 (RDIA…QDEN) and 203-226 (LHTI…RQYY).

As to quaternary structure, homodimer.

Functionally, depending on the conditions (growth phase and medium), acts as a positive or negative regulator of gadA and gadBC. Repression occurs directly or via the repression of the expression of gadX. Activation occurs directly by the binding of GadW to the gadA and gadBC promoters. In Escherichia coli O6:H1 (strain CFT073 / ATCC 700928 / UPEC), this protein is HTH-type transcriptional regulator GadW (gadW).